The following is a 318-amino-acid chain: Olfactory receptor 10H1 (318 aa).

Residues 1–25 lie on the Extracellular side of the membrane; the sequence is MQRANHSTVTQFILVGFSVFPHLQL. N-linked (GlcNAc...) asparagine glycosylation occurs at asparagine 5. The helical transmembrane segment at 26–46 threads the bilayer; it reads MLFLLFLLMYLFTLLGNLLIM. Residues 47–54 lie on the Cytoplasmic side of the membrane; sequence ATVWSERS. A helical membrane pass occupies residues 55–75; sequence LHTPMYLFLCALSVSEILYTV. Residues 76–99 lie on the Extracellular side of the membrane; sequence AIIPRMLADLLSTQRSIAFLACAS. Cysteine 97 and cysteine 189 are oxidised to a cystine. A helical transmembrane segment spans residues 100–120; sequence QMFFSFSFGFTHSFLLTVMGY. The Cytoplasmic segment spans residues 121 to 139; that stretch reads DRYVAICHPLRYNVLMSPR. Residues 140–160 form a helical membrane-spanning segment; sequence GCACLVGCSWAGGLVMGMVVT. Topologically, residues 161–197 are extracellular; it reads SAIFHLAFCGHKEIHHFACHVPPLLKLACGDDVLVVA. The helical transmembrane segment at 198–218 threads the bilayer; the sequence is KGVGLVCITALLGCFLLILLS. At 219–238 the chain is on the cytoplasmic side; that stretch reads YAFIVAAILKIPSAEGRNKA. Residues 239–259 traverse the membrane as a helical segment; the sequence is FSTCASHLTVVVVHYGFASVI. Residues 260 to 272 lie on the Extracellular side of the membrane; it reads YLKPKSPQSLEGD. A helical transmembrane segment spans residues 273–293; it reads TLMGITYTVLTPFLSPIIFSL. The Cytoplasmic portion of the chain corresponds to 294 to 318; it reads RNKELKVAMKKTFFSKLYPEKNVMM.

This sequence belongs to the G-protein coupled receptor 1 family.

Its subcellular location is the cell membrane. Odorant receptor. This is Olfactory receptor 10H1 (OR10H1) from Homo sapiens (Human).